We begin with the raw amino-acid sequence, 444 residues long: MRSLIAAVERIDPLTIYGRVAAVNGLLIEVRGGLTRLAVGARVEIERFGQKPLPAEVVGFRETRALLMPFGPVEGVGPGAEIRIVPEGAVVRPTKAWLGRIINAFGEPIDGLGPLPQGEVPYPLKTPPPPAHARGRVGERLDLGVRSMNVFTTTCRGQRLGIFAGSGVGKSVLLSMLAKEATCDAVVVGLIGERGREVREFVEETLGEEGLRRAVVVVATSDEPALTRRQAAYMTLAISEFMRDQDQEVLCLMDSVTRFAMAQREIGLAAGEPPTTKGYTPTVFTELPKLLERAGPGPIRPDGTTAAPITALFTVLVDGDDHNEPIADATRGILDGHIVMERAIAERGRFPAINVLKSISRTMPGCQHPHERDIVKGARQVMSAYSNMEELIRIGAYRAGADPVVDRAIRLNPAIEAFLSQDKEEATSLDDSFGMLGQILQSEY.

164 to 171 provides a ligand contact to ATP; the sequence is AGSGVGKS.

Belongs to the ATPase alpha/beta chains family.

The protein localises to the cytoplasm. The enzyme catalyses ATP + H2O + 4 H(+)(in) = ADP + phosphate + 5 H(+)(out). Its function is as follows. Probable catalytic subunit of a protein translocase for flagellum-specific export, or a proton translocase involved in local circuits at the flagellum. In Caulobacter vibrioides (strain ATCC 19089 / CIP 103742 / CB 15) (Caulobacter crescentus), this protein is Flagellum-specific ATP synthase (fliI).